Here is a 343-residue protein sequence, read N- to C-terminus: Dihydroorotate dehydrogenase (quinone) (343 aa).

FMN is bound by residues 61–65 (AGLDK) and threonine 85. Lysine 65 lines the substrate pocket. 110-114 (NRMGF) contributes to the substrate binding site. FMN-binding residues include asparagine 138 and asparagine 171. Asparagine 171 is a substrate binding site. Serine 174 (nucleophile) is an active-site residue. Asparagine 176 is a binding site for substrate. Positions 216 and 244 each coordinate FMN. Residue 245 to 246 (NT) participates in substrate binding. Residues glycine 267, glycine 296, and 317–318 (YS) each bind FMN.

The protein belongs to the dihydroorotate dehydrogenase family. Type 2 subfamily. In terms of assembly, monomer. FMN serves as cofactor.

The protein resides in the cell membrane. The enzyme catalyses (S)-dihydroorotate + a quinone = orotate + a quinol. It participates in pyrimidine metabolism; UMP biosynthesis via de novo pathway; orotate from (S)-dihydroorotate (quinone route): step 1/1. Catalyzes the conversion of dihydroorotate to orotate with quinone as electron acceptor. The sequence is that of Dihydroorotate dehydrogenase (quinone) from Pseudomonas savastanoi pv. phaseolicola (strain 1448A / Race 6) (Pseudomonas syringae pv. phaseolicola (strain 1448A / Race 6)).